Here is a 209-residue protein sequence, read N- to C-terminus: Histidine biosynthesis bifunctional protein HisIE (209 aa).

A phosphoribosyl-AMP cyclohydrolase region spans residues 1-116 (MKQADELRFN…EEQAADRFGI (116 aa)). The phosphoribosyl-ATP pyrophosphohydrolase stretch occupies residues 117–209 (MNELERVIAE…LKKRHSEIEE (93 aa)).

It in the N-terminal section; belongs to the PRA-CH family. The protein in the C-terminal section; belongs to the PRA-PH family.

The protein localises to the cytoplasm. The catalysed reaction is 1-(5-phospho-beta-D-ribosyl)-ATP + H2O = 1-(5-phospho-beta-D-ribosyl)-5'-AMP + diphosphate + H(+). It carries out the reaction 1-(5-phospho-beta-D-ribosyl)-5'-AMP + H2O = 1-(5-phospho-beta-D-ribosyl)-5-[(5-phospho-beta-D-ribosylamino)methylideneamino]imidazole-4-carboxamide. The protein operates within amino-acid biosynthesis; L-histidine biosynthesis; L-histidine from 5-phospho-alpha-D-ribose 1-diphosphate: step 2/9. Its pathway is amino-acid biosynthesis; L-histidine biosynthesis; L-histidine from 5-phospho-alpha-D-ribose 1-diphosphate: step 3/9. The chain is Histidine biosynthesis bifunctional protein HisIE (hisI) from Bacillus subtilis (strain 168).